We begin with the raw amino-acid sequence, 600 residues long: Aspartate--tRNA(Asp/Asn) ligase (600 aa).

Glutamate 174 provides a ligand contact to L-aspartate. The segment at 198 to 201 (QLFK) is aspartate. Arginine 220 lines the L-aspartate pocket. ATP-binding positions include 220–222 (RDE) and glutamine 229. Histidine 457 lines the L-aspartate pocket. Residue glutamate 491 coordinates ATP. Arginine 498 contacts L-aspartate. An ATP-binding site is contributed by 543 to 546 (GLDR).

This sequence belongs to the class-II aminoacyl-tRNA synthetase family. Type 1 subfamily. In terms of assembly, homodimer.

The protein resides in the cytoplasm. The catalysed reaction is tRNA(Asx) + L-aspartate + ATP = L-aspartyl-tRNA(Asx) + AMP + diphosphate. In terms of biological role, aspartyl-tRNA synthetase with relaxed tRNA specificity since it is able to aspartylate not only its cognate tRNA(Asp) but also tRNA(Asn). Reaction proceeds in two steps: L-aspartate is first activated by ATP to form Asp-AMP and then transferred to the acceptor end of tRNA(Asp/Asn). The protein is Aspartate--tRNA(Asp/Asn) ligase of Burkholderia pseudomallei (strain 668).